A 328-amino-acid chain; its full sequence is Cytochrome c biogenesis protein CcsA (328 aa).

The next 8 membrane-spanning stretches (helical) occupy residues 15-35 (FLVL…PSIP), 36-56 (LLPG…AALL), 68-88 (ISNL…VHLI), 97-117 (LVGV…TLSL), 142-162 (VMML…AFLI), 236-256 (VIGL…VWAN), 263-283 (WSWD…AAYL), and 297-317 (AILA…VNLL).

The protein belongs to the CcmF/CycK/Ccl1/NrfE/CcsA family. May interact with ccs1.

The protein resides in the cellular thylakoid membrane. Functionally, required during biogenesis of c-type cytochromes (cytochrome c6 and cytochrome f) at the step of heme attachment. This is Cytochrome c biogenesis protein CcsA from Microcystis aeruginosa (strain NIES-843 / IAM M-2473).